The primary structure comprises 236 residues: 2-C-methyl-D-erythritol 4-phosphate cytidylyltransferase (236 aa).

The protein belongs to the IspD/TarI cytidylyltransferase family. IspD subfamily.

The enzyme catalyses 2-C-methyl-D-erythritol 4-phosphate + CTP + H(+) = 4-CDP-2-C-methyl-D-erythritol + diphosphate. It participates in isoprenoid biosynthesis; isopentenyl diphosphate biosynthesis via DXP pathway; isopentenyl diphosphate from 1-deoxy-D-xylulose 5-phosphate: step 2/6. Functionally, catalyzes the formation of 4-diphosphocytidyl-2-C-methyl-D-erythritol from CTP and 2-C-methyl-D-erythritol 4-phosphate (MEP). The polypeptide is 2-C-methyl-D-erythritol 4-phosphate cytidylyltransferase (Burkholderia multivorans (strain ATCC 17616 / 249)).